Here is a 349-residue protein sequence, read N- to C-terminus: MQVHIELKKVVDNSYDITIGTLPTLHFDTKVAVVTNSTISALHLEYLLSKISAKELYVVTLRDGEEYKNQQSIDTILEALFENRFNRKSMIIAFGGGVIGDMSGYAASIYQRGIDFIQIPTTLLSQVDASVGGKTGMNNRYGKNLVGAFHQPRAVYIDPHFLTTLPPREFGAGVAEIVKMAVTFDKDFFEFLERADLSKPEILQEAIKKALQTKAKVVTQDEKEQGIRAALNYGHTFGHVVENETAYKEFLHGEAVAIGMVMANEMAIKMNYMFEKEALRVKALLQKYNLPTTYAIKDVKAFYEAFFLDKKSSDSAITFILPLGIGDVVITDKVDTGTIMCVLNKFGKQ.

NAD(+)-binding positions include 63 to 68 (DGEEYK), 97 to 101 (GVIGD), 121 to 122 (TT), K134, K143, and 161 to 164 (FLTT). Zn(2+)-binding residues include E176, H235, and H252.

It belongs to the sugar phosphate cyclases superfamily. Dehydroquinate synthase family. Co(2+) serves as cofactor. It depends on Zn(2+) as a cofactor. The cofactor is NAD(+).

It is found in the cytoplasm. The enzyme catalyses 7-phospho-2-dehydro-3-deoxy-D-arabino-heptonate = 3-dehydroquinate + phosphate. Its pathway is metabolic intermediate biosynthesis; chorismate biosynthesis; chorismate from D-erythrose 4-phosphate and phosphoenolpyruvate: step 2/7. Its function is as follows. Catalyzes the conversion of 3-deoxy-D-arabino-heptulosonate 7-phosphate (DAHP) to dehydroquinate (DHQ). The chain is 3-dehydroquinate synthase from Sulfurimonas denitrificans (strain ATCC 33889 / DSM 1251) (Thiomicrospira denitrificans (strain ATCC 33889 / DSM 1251)).